The following is a 2567-amino-acid chain: Highly reducing polyketide synthase sor1 (2567 aa).

The region spanning 14–436 (SEPIAIIGMS…GANAHIILED (423 aa)) is the Ketosynthase family 3 (KS3) domain. Active-site for beta-ketoacyl synthase activity residues include cysteine 187, histidine 322, and histidine 359. The malonyl-CoA:ACP transacylase (MAT) domain stretch occupies residues 550 to 841 (VFTGQGAQWW…VVEVGPHTAL (292 aa)). The interval 939–1079 (HHLLGSLVEG…GLISIEFEAS (141 aa)) is N-terminal hotdog fold. The interval 939–1249 (HHLLGSLVEG…GFSYQSLGRS (311 aa)) is dehydratase (DH) domain. Residues 939-1252 (HHLLGSLVEG…YQSLGRSVSL (314 aa)) form the PKS/mFAS DH domain. Histidine 971 (proton acceptor; for dehydratase activity) is an active-site residue. The tract at residues 1095–1252 (YKRQIPPAQL…YQSLGRSVSL (158 aa)) is C-terminal hotdog fold. Catalysis depends on aspartate 1161, which acts as the Proton donor; for dehydratase activity. Residues 1426–1534 (LEIGASTGGI…RSLLKPGGTL (109 aa)) form a methyltransferase (CMet) domain region. Residues 1852 to 2163 (FLPELLVFGD…TEEETGKRVL (312 aa)) are enoyl reductase (ER) domain. The interval 2187–2369 (ASYLIVGGNG…AVSIDLSLVD (183 aa)) is ketoreductase (KR) domain. The region spanning 2481 to 2558 (EAISVVGSAV…QLVANVVDRS (78 aa)) is the Carrier domain. At serine 2518 the chain carries O-(pantetheine 4'-phosphoryl)serine.

It functions in the pathway secondary metabolite biosynthesis. Functionally, highly reducing polyketide synthase; part of the SOR gene cluster that mediates the biosynthesis of sorbicillinoids, a diverse group of yellow secondary metabolites that restrict growth of competing pathogenic fungi but not of bacteria. Sorbicillinoids biosynthesis requires the action of two PKSs. The SOR cluster is required for the production of trichodimerol and dihydrotrichotetronin, with sor2 being sufficient for production of trichodimerol, but not dihydrotrichotetronin in the light. Sor1 iteratively combines three acetyl units and the growing chain is modified by the ketoacyl reductase subunit, and optional by the enoyl reductase subunit in the second cycle. The polyketide is then handed over to the PKS sor2, which adds three more acetyl units, and two methyl groups. Sor2 releases an aldehyde, which undergoes spontaneous cyclization resulting in the formation of sorbicillin or 2',3'-dihydrosorbicillin. The monooxygenase sor5 oxidizes sorbicillin and 2',3'-dihydrosorbicillin to 2',3'-dihydrosorbicillinol and sorbicillinol, respectively. The oxidoreductase sor8 further converts sorbicillinol into oxosorbicillinol. Sorbicillinol is the building block for the other sorbicillinoids such as disorbicillinol, bisvertinolon, dihydrobisvertinolone, and dihydrotrichotetronine. This Hypocrea jecorina (strain QM6a) (Trichoderma reesei) protein is Highly reducing polyketide synthase sor1.